The following is a 351-amino-acid chain: uncharacterized protein (351 aa).

Mn(2+)-binding residues include D215, D226, H290, E319, and E333.

This sequence belongs to the peptidase M24B family. Requires Mn(2+) as cofactor.

This is an uncharacterized protein from Staphylococcus epidermidis (strain ATCC 35984 / DSM 28319 / BCRC 17069 / CCUG 31568 / BM 3577 / RP62A).